The sequence spans 332 residues: Glycerol-3-phosphate dehydrogenase [NAD(P)+] (332 aa).

The NADPH site is built by Ser10, Trp11, Lys31, and Lys105. Sn-glycerol 3-phosphate contacts are provided by Lys105, Gly136, and Ser138. An NADPH-binding site is contributed by Ala140. Residues Lys191, Asp244, Ser254, Arg255, and Asn256 each coordinate sn-glycerol 3-phosphate. The active-site Proton acceptor is the Lys191. NADPH is bound at residue Arg255. NADPH is bound by residues Val279 and Glu281.

It belongs to the NAD-dependent glycerol-3-phosphate dehydrogenase family.

The protein resides in the cytoplasm. It catalyses the reaction sn-glycerol 3-phosphate + NAD(+) = dihydroxyacetone phosphate + NADH + H(+). The catalysed reaction is sn-glycerol 3-phosphate + NADP(+) = dihydroxyacetone phosphate + NADPH + H(+). The protein operates within membrane lipid metabolism; glycerophospholipid metabolism. In terms of biological role, catalyzes the reduction of the glycolytic intermediate dihydroxyacetone phosphate (DHAP) to sn-glycerol 3-phosphate (G3P), the key precursor for phospholipid synthesis. The chain is Glycerol-3-phosphate dehydrogenase [NAD(P)+] from Anaeromyxobacter sp. (strain K).